We begin with the raw amino-acid sequence, 516 residues long: L-amino acid oxidase Lm29 (516 aa).

The signal sequence occupies residues 1–18; it reads MNVFFMFSLLFLAALGSC. A disulfide bridge links Cys28 with Cys191. FAD is bound by residues 61-62, 81-82, Arg89, and 105-108; these read MS, EA, and GPMR. Position 108 (Arg108) interacts with substrate. N-linked (GlcNAc...) asparagine glycosylation is present at Asn190. Substrate is bound at residue His241. Residue Val279 coordinates FAD. Cysteines 349 and 430 form a disulfide. The N-linked (GlcNAc...) asparagine glycan is linked to Asn379. Tyr390 provides a ligand contact to substrate. FAD is bound by residues Glu475 and 482 to 487; that span reads GWIDST. Substrate is bound at residue 482-483; the sequence is GW.

This sequence belongs to the flavin monoamine oxidase family. FIG1 subfamily. As to quaternary structure, homodimer; non-covalently linked. Requires FAD as cofactor. As to expression, expressed by the venom gland.

Its subcellular location is the secreted. It catalyses the reaction an L-alpha-amino acid + O2 + H2O = a 2-oxocarboxylate + H2O2 + NH4(+). The enzyme catalyses L-leucine + O2 + H2O = 4-methyl-2-oxopentanoate + H2O2 + NH4(+). The catalysed reaction is L-phenylalanine + O2 + H2O = 3-phenylpyruvate + H2O2 + NH4(+). It carries out the reaction L-tryptophan + O2 + H2O = indole-3-pyruvate + H2O2 + NH4(+). It catalyses the reaction L-methionine + O2 + H2O = 4-methylsulfanyl-2-oxobutanoate + H2O2 + NH4(+). The enzyme catalyses L-isoleucine + O2 + H2O = (S)-3-methyl-2-oxopentanoate + H2O2 + NH4(+). The catalysed reaction is L-tyrosine + O2 + H2O = 3-(4-hydroxyphenyl)pyruvate + H2O2 + NH4(+). Its function is as follows. Catalyzes an oxidative deamination of predominantly hydrophobic and aromatic L-amino acids, thus producing hydrogen peroxide that may contribute to the diverse toxic effects of this enzyme. Is highly active on L-Met=L-Leu&gt;&gt;L-Phe&gt;L-Trp&gt;L-Tyr&gt;L-Ile, and weakly or not active on L-His, L-Arg, L-Val, L-Gln, L-Thr, L-Lys, and L-Ser. Exhibits a low myotoxicity (a mild myonecrosis is observed after injection in mice quadriceps muscle). In vitro, is cytotoxic to a lot of human cell lines, including AGS (IC(50)=22.7 ug/ml), MCF-7 (IC(50)=1.4 ug/ml), HL-60, HeLa and Jurkat cells, as well as to the parasite Leishmania brasiliensis (IC(50)=2.22 ug/ml). This cytotoxicity is dependent on the production of hydrogen peroxyde, since it is inhibited by catalase, a hydrogen peroxyde scavenger. The sequence is that of L-amino acid oxidase Lm29 from Lachesis muta (South American bushmaster).